We begin with the raw amino-acid sequence, 365 residues long: UPF0718 protein MJ0584 (365 aa).

11 helical membrane-spanning segments follow: residues Met6 to Val26, Leu32 to Ile52, Val67 to Ala87, Ala108 to Leu128, Ala130 to Ser150, Ile174 to Phe194, Leu201 to Val221, Ile245 to Pro265, Phe282 to Ile302, Leu308 to Pro328, and Thr344 to Leu364.

This sequence belongs to the UPF0718 family.

The protein localises to the cell membrane. The polypeptide is UPF0718 protein MJ0584 (Methanocaldococcus jannaschii (strain ATCC 43067 / DSM 2661 / JAL-1 / JCM 10045 / NBRC 100440) (Methanococcus jannaschii)).